Reading from the N-terminus, the 102-residue chain is Small ribosomal subunit protein uS10 (102 aa).

It belongs to the universal ribosomal protein uS10 family. Part of the 30S ribosomal subunit.

Its function is as follows. Involved in the binding of tRNA to the ribosomes. This chain is Small ribosomal subunit protein uS10, found in Halalkalibacterium halodurans (strain ATCC BAA-125 / DSM 18197 / FERM 7344 / JCM 9153 / C-125) (Bacillus halodurans).